We begin with the raw amino-acid sequence, 74 residues long: MIKVEIGQCLIPELCRKKDITINELSEITGIKKQQLSDYNRLVKVDMSIRTAKRIAAALDCNVEDLYEFKVERH.

Residues 11 to 66 enclose the HTH cro/C1-type domain; sequence IPELCRKKDITINELSEITGIKKQQLSDYNRLVKVDMSIRTAKRIAAALDCNVEDL. Positions 22–41 form a DNA-binding region, H-T-H motif; that stretch reads INELSEITGIKKQQLSDYNR.

In Bacillus subtilis (strain 168), this protein is SPbeta prophage-derived uncharacterized HTH-type transcriptional regulator YopS (yopS).